Here is a 120-residue protein sequence, read N- to C-terminus: NAD(P)H-quinone oxidoreductase subunit 3, chloroplastic (120 aa).

3 consecutive transmembrane segments (helical) span residues 9–29 (IFWAFLIISSAIPVLAFLISG), 64–84 (MFALVFVVFDVETVFLYPWAM), and 88–108 (VLGVSAFLEAFIFVLILILGL).

It belongs to the complex I subunit 3 family. In terms of assembly, NDH is composed of at least 16 different subunits, 5 of which are encoded in the nucleus.

The protein localises to the plastid. The protein resides in the chloroplast thylakoid membrane. The catalysed reaction is a plastoquinone + NADH + (n+1) H(+)(in) = a plastoquinol + NAD(+) + n H(+)(out). It catalyses the reaction a plastoquinone + NADPH + (n+1) H(+)(in) = a plastoquinol + NADP(+) + n H(+)(out). Its function is as follows. NDH shuttles electrons from NAD(P)H:plastoquinone, via FMN and iron-sulfur (Fe-S) centers, to quinones in the photosynthetic chain and possibly in a chloroplast respiratory chain. The immediate electron acceptor for the enzyme in this species is believed to be plastoquinone. Couples the redox reaction to proton translocation, and thus conserves the redox energy in a proton gradient. The polypeptide is NAD(P)H-quinone oxidoreductase subunit 3, chloroplastic (Draba nemorosa (Woodland whitlowgrass)).